We begin with the raw amino-acid sequence, 306 residues long: Porphobilinogen deaminase (306 aa).

An S-(dipyrrolylmethanemethyl)cysteine modification is found at C240.

Belongs to the HMBS family. Monomer. Dipyrromethane is required as a cofactor.

It catalyses the reaction 4 porphobilinogen + H2O = hydroxymethylbilane + 4 NH4(+). It functions in the pathway porphyrin-containing compound metabolism; protoporphyrin-IX biosynthesis; coproporphyrinogen-III from 5-aminolevulinate: step 2/4. Tetrapolymerization of the monopyrrole PBG into the hydroxymethylbilane pre-uroporphyrinogen in several discrete steps. The sequence is that of Porphobilinogen deaminase from Syntrophomonas wolfei subsp. wolfei (strain DSM 2245B / Goettingen).